The chain runs to 551 residues: Chaperonin GroEL 2 (551 aa).

ATP is bound by residues 30-33 (TLGP), Lys51, 87-91 (DGTTT), Gly415, and Asp496.

The protein belongs to the chaperonin (HSP60) family. As to quaternary structure, forms a cylinder of 14 subunits composed of two heptameric rings stacked back-to-back. Interacts with the co-chaperonin GroES.

It is found in the cytoplasm. It catalyses the reaction ATP + H2O + a folded polypeptide = ADP + phosphate + an unfolded polypeptide.. Functionally, together with its co-chaperonin GroES, plays an essential role in assisting protein folding. The GroEL-GroES system forms a nano-cage that allows encapsulation of the non-native substrate proteins and provides a physical environment optimized to promote and accelerate protein folding. This chain is Chaperonin GroEL 2, found in Rhodopseudomonas palustris (strain BisB18).